The primary structure comprises 102 residues: Ferredoxin (102 aa).

2 4Fe-4S ferredoxin-type domains span residues 45–73 (VSVN…ELVE) and 74–102 (TWIE…EVMK). [4Fe-4S] cluster-binding residues include Cys54, Cys57, Cys60, Cys64, Cys83, Cys86, Cys89, and Cys93.

It depends on [4Fe-4S] cluster as a cofactor.

It functions in the pathway membrane lipid metabolism; glycerophospholipid metabolism. Functionally, ferredoxin that is the specific electron donor for the geranylgeranyl reductase GGR involved in the biosynthesis of archaeal membrane lipids. This Methanosarcina acetivorans (strain ATCC 35395 / DSM 2834 / JCM 12185 / C2A) protein is Ferredoxin.